Reading from the N-terminus, the 256-residue chain is Thiazole synthase (256 aa).

K95 functions as the Schiff-base intermediate with DXP in the catalytic mechanism. Residues G156, 182–183 (AG), and 204–205 (NT) contribute to the 1-deoxy-D-xylulose 5-phosphate site.

The protein belongs to the ThiG family. In terms of assembly, homotetramer. Forms heterodimers with either ThiH or ThiS.

It localises to the cytoplasm. The enzyme catalyses [ThiS sulfur-carrier protein]-C-terminal-Gly-aminoethanethioate + 2-iminoacetate + 1-deoxy-D-xylulose 5-phosphate = [ThiS sulfur-carrier protein]-C-terminal Gly-Gly + 2-[(2R,5Z)-2-carboxy-4-methylthiazol-5(2H)-ylidene]ethyl phosphate + 2 H2O + H(+). Its pathway is cofactor biosynthesis; thiamine diphosphate biosynthesis. In terms of biological role, catalyzes the rearrangement of 1-deoxy-D-xylulose 5-phosphate (DXP) to produce the thiazole phosphate moiety of thiamine. Sulfur is provided by the thiocarboxylate moiety of the carrier protein ThiS. In vitro, sulfur can be provided by H(2)S. The sequence is that of Thiazole synthase from Alteromonas mediterranea (strain DSM 17117 / CIP 110805 / LMG 28347 / Deep ecotype).